Consider the following 689-residue polypeptide: Protein asunder (689 aa).

Residues 521-550 (NGARLKLSKAKDQYRLLYRELEQLIQLNAT) adopt a coiled-coil conformation. The interval 578–619 (GASLLRSYTESPLSPERLEPITSGSASGSSNSNSLLKASKRR) is disordered. The span at 600 to 614 (SGSASGSSNSNSLLK) shows a compositional bias: low complexity. The short motif at 613 to 619 (LKASKRR) is the Nuclear localization signal (NLS) element.

The protein belongs to the Integrator subunit 13 family. As to quaternary structure, belongs to the multiprotein complex Integrator, at least composed of IntS1, IntS2, IntS3, IntS4, omd/IntS5, IntS6, defl/IntS7, IntS8, IntS9, IntS10, IntS11, IntS12, asun/IntS13, IntS14 and IntS15. The core complex associates with protein phosphatase 2A subunits mts/PP2A and Pp2A-29B, to form the Integrator-PP2A (INTAC) complex. Phosphorylated.

It is found in the nucleus. The protein resides in the cytoplasm. Its subcellular location is the perinuclear region. Its function is as follows. Component of the integrator complex, a multiprotein complex that terminates RNA polymerase II (Pol II) transcription in the promoter-proximal region of genes. The integrator complex provides a quality checkpoint during transcription elongation by driving premature transcription termination of transcripts that are unfavorably configured for transcriptional elongation: the complex terminates transcription by (1) catalyzing dephosphorylation of the C-terminal domain (CTD) of Pol II subunit Polr2A/Rbp1 and Spt5, and (2) degrading the exiting nascent RNA transcript via endonuclease activity. The integrator complex is also involved in the 3'-end processing of the U7 snRNA, and also the spliceosomal snRNAs U1, U2, U4 and U5. The protein is Protein asunder (asun) of Drosophila erecta (Fruit fly).